A 321-amino-acid chain; its full sequence is Citrate synthase (321 aa).

Residues H248 and D306 contribute to the active site.

Belongs to the citrate synthase family.

The enzyme catalyses oxaloacetate + acetyl-CoA + H2O = citrate + CoA + H(+). The protein operates within carbohydrate metabolism; tricarboxylic acid cycle; isocitrate from oxaloacetate: step 1/2. The protein is Citrate synthase (gltA) of Bartonella bacilliformis.